Reading from the N-terminus, the 20-residue chain is Peroxidase 1 (20 aa).

His-14 serves as a coordination point for heme. Residue Thr-15 participates in Ca(2+) binding.

The protein belongs to the peroxidase family. Classical plant (class III) peroxidase subfamily. Requires Ca(2+) as cofactor. Heme b serves as cofactor.

It is found in the secreted. It catalyses the reaction 2 a phenolic donor + H2O2 = 2 a phenolic radical donor + 2 H2O. Its function is as follows. Removal of H(2)O(2), oxidation of toxic reductants, biosynthesis and degradation of lignin, suberization, auxin catabolism, response to environmental stresses such as wounding, pathogen attack and oxidative stress. These functions might be dependent on each isozyme/isoform in each plant tissue. This Betula pendula (European white birch) protein is Peroxidase 1.